The sequence spans 128 residues: Large ribosomal subunit protein bL17 (128 aa).

This sequence belongs to the bacterial ribosomal protein bL17 family. In terms of assembly, part of the 50S ribosomal subunit. Contacts protein L32.

The polypeptide is Large ribosomal subunit protein bL17 (Streptococcus pyogenes serotype M5 (strain Manfredo)).